We begin with the raw amino-acid sequence, 159 residues long: NADH-quinone oxidoreductase subunit I (159 aa).

2 consecutive 4Fe-4S ferredoxin-type domains span residues 51-80 (RRYENGEERCIACKLCEAICPAQAIVIEAD) and 90-119 (TRYDIDMTKCIYCGLCQEACPVDAIVEGPN). 8 residues coordinate [4Fe-4S] cluster: Cys-60, Cys-63, Cys-66, Cys-70, Cys-99, Cys-102, Cys-105, and Cys-109.

This sequence belongs to the complex I 23 kDa subunit family. As to quaternary structure, NDH-1 is composed of 14 different subunits. Subunits NuoA, H, J, K, L, M, N constitute the membrane sector of the complex. The cofactor is [4Fe-4S] cluster.

The protein resides in the cell inner membrane. The enzyme catalyses a quinone + NADH + 5 H(+)(in) = a quinol + NAD(+) + 4 H(+)(out). NDH-1 shuttles electrons from NADH, via FMN and iron-sulfur (Fe-S) centers, to quinones in the respiratory chain. The immediate electron acceptor for the enzyme in this species is believed to be ubiquinone. Couples the redox reaction to proton translocation (for every two electrons transferred, four hydrogen ions are translocated across the cytoplasmic membrane), and thus conserves the redox energy in a proton gradient. The polypeptide is NADH-quinone oxidoreductase subunit I (Rickettsia conorii (strain ATCC VR-613 / Malish 7)).